The sequence spans 226 residues: DNA mismatch repair protein MutH (226 aa).

The protein belongs to the MutH family.

It localises to the cytoplasm. In terms of biological role, sequence-specific endonuclease that cleaves unmethylated GATC sequences. It is involved in DNA mismatch repair. The sequence is that of DNA mismatch repair protein MutH from Actinobacillus pleuropneumoniae serotype 3 (strain JL03).